A 316-amino-acid polypeptide reads, in one-letter code: Ribonuclease Z (316 aa).

Histidine 59, histidine 61, aspartate 63, histidine 64, histidine 135, aspartate 203, and histidine 261 together coordinate Zn(2+). Aspartate 63 functions as the Proton acceptor in the catalytic mechanism.

This sequence belongs to the RNase Z family. As to quaternary structure, homodimer. Zn(2+) serves as cofactor.

It carries out the reaction Endonucleolytic cleavage of RNA, removing extra 3' nucleotides from tRNA precursor, generating 3' termini of tRNAs. A 3'-hydroxy group is left at the tRNA terminus and a 5'-phosphoryl group is left at the trailer molecule.. Functionally, zinc phosphodiesterase, which displays some tRNA 3'-processing endonuclease activity. Probably involved in tRNA maturation, by removing a 3'-trailer from precursor tRNA. The protein is Ribonuclease Z of Nanoarchaeum equitans (strain Kin4-M).